We begin with the raw amino-acid sequence, 251 residues long: Triosephosphate isomerase (251 aa).

9–11 is a substrate binding site; sequence NWK. H95 acts as the Electrophile in catalysis. E167 acts as the Proton acceptor in catalysis. Residues G173, S212, and 233–234 contribute to the substrate site; that span reads GG.

Belongs to the triosephosphate isomerase family. As to quaternary structure, homodimer.

It is found in the cytoplasm. It carries out the reaction D-glyceraldehyde 3-phosphate = dihydroxyacetone phosphate. Its pathway is carbohydrate biosynthesis; gluconeogenesis. The protein operates within carbohydrate degradation; glycolysis; D-glyceraldehyde 3-phosphate from glycerone phosphate: step 1/1. Its function is as follows. Involved in the gluconeogenesis. Catalyzes stereospecifically the conversion of dihydroxyacetone phosphate (DHAP) to D-glyceraldehyde-3-phosphate (G3P). This chain is Triosephosphate isomerase, found in Vibrio sp. (strain ANT-300).